A 205-amino-acid chain; its full sequence is High frequency lysogenization protein HflD homolog (205 aa).

This sequence belongs to the HflD family.

It localises to the cytoplasm. Its subcellular location is the cell inner membrane. In Alkalilimnicola ehrlichii (strain ATCC BAA-1101 / DSM 17681 / MLHE-1), this protein is High frequency lysogenization protein HflD homolog.